A 102-amino-acid polypeptide reads, in one-letter code: Citrate lyase acyl carrier protein (102 aa).

An O-(phosphoribosyl dephospho-coenzyme A)serine modification is found at Ser-14.

Belongs to the CitD family. As to quaternary structure, oligomer with a subunit composition of (alpha,beta,gamma)6.

The protein resides in the cytoplasm. In terms of biological role, covalent carrier of the coenzyme of citrate lyase. This is Citrate lyase acyl carrier protein from Streptococcus pyogenes serotype M2 (strain MGAS10270).